Reading from the N-terminus, the 656-residue chain is MTDPLIPAVLAFRANGTPFSPLYDDIYHSAVGGLEQAHYVFLRGNALPERWQERRVFTVVETGFGMGINFLVTWAAWRADSSRCERLHFVSTEKHPFTVDDLRKVYAATISDPEIAALAQALADAWPMLVPGTHRLEFEEGRVVLTLVFADAQDSVPALRLRADAFYLDGFAPARNPELWTSAIFKALARLAGEGATFATYSSAGDIKRALTQCGFEYRKVDGFGWKRAMLVGRFAPRWRVRRHEPPAPLVVDERHAVVIGTGLAGCAVIERLAARGWRVTSLERHAAVAQEASGNPAGVFHPMISRDDSVASRVTRTGFLYSLRHWAALERLGYGPSRGSKGLLQIAADDEEALSISQAIAAASYPSEYVTSVPADEAQRLAGMPLAHGGWFFPYGGWIDPASLCAAQCAAAGPLLERRFGVDVARIERAGGQWIVFDTAGQVVARAPVVIVASAHDAARIAGLQYAPTRSIRGQLTLLPAGTVRPPLELPVIGEGYAVPLANGATLTGATYELDDPDTSLRTDGHLENLARVAQMLPAFAGIVDRADPAALAGRVAFRCVTSDRMPMIGQLADETVAARDAQRLRGAWPLDLPRTDGLYGAFAYGSRGLVWAALGAELIASQLEGEPWPLERDLAEDIDPARFLLRALRQGTVS.

Residues 1–236 (MTDPLIPAVL…KRAMLVGRFA (236 aa)) form a tRNA (mnm(5)s(2)U34)-methyltransferase region. The interval 260–656 (IGTGLAGCAV…LRALRQGTVS (397 aa)) is FAD-dependent cmnm(5)s(2)U34 oxidoreductase.

In the N-terminal section; belongs to the methyltransferase superfamily. tRNA (mnm(5)s(2)U34)-methyltransferase family. The protein in the C-terminal section; belongs to the DAO family. FAD serves as cofactor.

It is found in the cytoplasm. It carries out the reaction 5-aminomethyl-2-thiouridine(34) in tRNA + S-adenosyl-L-methionine = 5-methylaminomethyl-2-thiouridine(34) in tRNA + S-adenosyl-L-homocysteine + H(+). Functionally, catalyzes the last two steps in the biosynthesis of 5-methylaminomethyl-2-thiouridine (mnm(5)s(2)U) at the wobble position (U34) in tRNA. Catalyzes the FAD-dependent demodification of cmnm(5)s(2)U34 to nm(5)s(2)U34, followed by the transfer of a methyl group from S-adenosyl-L-methionine to nm(5)s(2)U34, to form mnm(5)s(2)U34. The polypeptide is tRNA 5-methylaminomethyl-2-thiouridine biosynthesis bifunctional protein MnmC (Paraburkholderia xenovorans (strain LB400)).